We begin with the raw amino-acid sequence, 228 residues long: DNA-3-methyladenine glycosylase 1 (228 aa).

D170 serves as the catalytic Proton acceptor.

Belongs to the alkylbase DNA glycosidase AlkA family.

It carries out the reaction Hydrolysis of alkylated DNA, releasing 3-methyladenine, 3-methylguanine, 7-methylguanine and 7-methyladenine.. Functionally, hydrolysis of the deoxyribose N-glycosidic bond to excise 3-methyladenine or 7-methyladenine from the damaged DNA polymer formed by alkylation lesions. Can release ethylated and propylated bases from DNA in addition to 3-methyladenine. This is DNA-3-methyladenine glycosylase 1 (mag1) from Schizosaccharomyces pombe (strain 972 / ATCC 24843) (Fission yeast).